Reading from the N-terminus, the 262-residue chain is ClpXP adapter protein SpxH (262 aa).

Belongs to the SpxH family. In terms of assembly, interacts with Spx.

The protein resides in the cytoplasm. Its function is as follows. Adapter protein required for efficient degradation of Spx by ClpXP under non-stress conditions. Interaction with Spx stabilizes Spx and exposes the C-terminus of Spx for recognition and proteolysis by ClpXP. In Staphylococcus saprophyticus subsp. saprophyticus (strain ATCC 15305 / DSM 20229 / NCIMB 8711 / NCTC 7292 / S-41), this protein is ClpXP adapter protein SpxH.